Reading from the N-terminus, the 100-residue chain is Urease subunit gamma (100 aa).

Belongs to the urease gamma subunit family. Heterotrimer of UreA (gamma), UreB (beta) and UreC (alpha) subunits. Three heterotrimers associate to form the active enzyme.

The protein resides in the cytoplasm. It catalyses the reaction urea + 2 H2O + H(+) = hydrogencarbonate + 2 NH4(+). Its pathway is nitrogen metabolism; urea degradation; CO(2) and NH(3) from urea (urease route): step 1/1. The protein is Urease subunit gamma of Parasynechococcus marenigrum (strain WH8102).